The chain runs to 345 residues: Baculoviral IAP repeat-containing protein 7-B (345 aa).

BIR repeat units follow at residues 46–112 and 154–219; these read RQRS…PFLQ and RLGS…DFLL. Residues C188, C191, H208, and C215 each coordinate Zn(2+). S237 bears the Phosphoserine mark. S241 carries the phosphoserine; by MAPK1 modification. Phosphoserine is present on S253. A Phosphoserine; by MAPK1 modification is found at S257. Residues 258 to 286 form a disordered region; the sequence is TESVSVPRAPTPGERSEPPKVSGPPLSTE. The segment at 298 to 333 adopts an RING-type zinc-finger fold; that stretch reads CKVCMDKDVSMLFVPCGHLVVCTECAPNLRHCPICR.

It belongs to the IAP family. In terms of processing, auto-ubiquitinated, and degraded in a 2-step mechanism; a caspase-independent first step and a caspase-dependent second step. Post-translationally, phosphorylated via MAPK-dependent and CDK-dependent pathways during oocyte maturation. Phosphorylation does not appear to affect caspase inhibition or autoubiquitination activity.

Its subcellular location is the cytoplasm. It carries out the reaction S-ubiquitinyl-[E2 ubiquitin-conjugating enzyme]-L-cysteine + [acceptor protein]-L-lysine = [E2 ubiquitin-conjugating enzyme]-L-cysteine + N(6)-ubiquitinyl-[acceptor protein]-L-lysine.. Its function is as follows. Weak apoptotic suppressor. Has E3 ubiquitin-protein ligase activity. Weak inhibitor of caspase activity. In Xenopus laevis (African clawed frog), this protein is Baculoviral IAP repeat-containing protein 7-B (birc7-b).